Here is a 137-residue protein sequence, read N- to C-terminus: Small ribosomal subunit protein uS12 (137 aa).

Residues 1-57 (MPTINQLIRKGRKSKGSKSNSPALNFGYNSYKKVQTNNSAPQKRGVATRVGTMTPKK) are disordered. The span at 32–41 (KKVQTNNSAP) shows a compositional bias: polar residues. Asp102 carries the post-translational modification 3-methylthioaspartic acid.

Belongs to the universal ribosomal protein uS12 family. As to quaternary structure, part of the 30S ribosomal subunit. Contacts proteins S8 and S17. May interact with IF1 in the 30S initiation complex.

Its function is as follows. With S4 and S5 plays an important role in translational accuracy. Functionally, interacts with and stabilizes bases of the 16S rRNA that are involved in tRNA selection in the A site and with the mRNA backbone. Located at the interface of the 30S and 50S subunits, it traverses the body of the 30S subunit contacting proteins on the other side and probably holding the rRNA structure together. The combined cluster of proteins S8, S12 and S17 appears to hold together the shoulder and platform of the 30S subunit. The chain is Small ribosomal subunit protein uS12 from Ligilactobacillus salivarius (strain UCC118) (Lactobacillus salivarius).